We begin with the raw amino-acid sequence, 86 residues long: Small ribosomal subunit protein uS15c (86 aa).

This sequence belongs to the universal ribosomal protein uS15 family. Part of the 30S ribosomal subunit.

It localises to the plastid. The protein is Small ribosomal subunit protein uS15c (rps15) of Cuscuta gronovii (Common dodder).